We begin with the raw amino-acid sequence, 322 residues long: Phosphoenolpyruvate transferase (322 aa).

Position 58 (Asp-58) interacts with 7,8-didemethyl-8-hydroxy-5-deazariboflavin.

Belongs to the CofD family. Homodimer. Mg(2+) serves as cofactor.

The enzyme catalyses enolpyruvoyl-2-diphospho-5'-guanosine + 7,8-didemethyl-8-hydroxy-5-deazariboflavin = dehydro coenzyme F420-0 + GMP + H(+). It participates in cofactor biosynthesis; coenzyme F420 biosynthesis. In terms of biological role, catalyzes the transfer of the phosphoenolpyruvate moiety from enoylpyruvoyl-2-diphospho-5'-guanosine (EPPG) to 7,8-didemethyl-8-hydroxy-5-deazariboflavin (FO) with the formation of dehydro coenzyme F420-0 and GMP. This chain is Phosphoenolpyruvate transferase, found in Thermobifida fusca (strain YX).